We begin with the raw amino-acid sequence, 230 residues long: 5'-methylthioadenosine/S-adenosylhomocysteine nucleosidase (230 aa).

Glu12 (proton acceptor) is an active-site residue. Substrate contacts are provided by residues Gly78, Ile152, and 173 to 174; that span reads ME. The active-site Proton donor is Asp197.

It belongs to the PNP/UDP phosphorylase family. MtnN subfamily.

It catalyses the reaction S-adenosyl-L-homocysteine + H2O = S-(5-deoxy-D-ribos-5-yl)-L-homocysteine + adenine. The enzyme catalyses S-methyl-5'-thioadenosine + H2O = 5-(methylsulfanyl)-D-ribose + adenine. It carries out the reaction 5'-deoxyadenosine + H2O = 5-deoxy-D-ribose + adenine. The protein operates within amino-acid biosynthesis; L-methionine biosynthesis via salvage pathway; S-methyl-5-thio-alpha-D-ribose 1-phosphate from S-methyl-5'-thioadenosine (hydrolase route): step 1/2. Catalyzes the irreversible cleavage of the glycosidic bond in both 5'-methylthioadenosine (MTA) and S-adenosylhomocysteine (SAH/AdoHcy) to adenine and the corresponding thioribose, 5'-methylthioribose and S-ribosylhomocysteine, respectively. Also cleaves 5'-deoxyadenosine, a toxic by-product of radical S-adenosylmethionine (SAM) enzymes, into 5-deoxyribose and adenine. This chain is 5'-methylthioadenosine/S-adenosylhomocysteine nucleosidase, found in Actinobacillus succinogenes (strain ATCC 55618 / DSM 22257 / CCUG 43843 / 130Z).